Here is a 162-residue protein sequence, read N- to C-terminus: UPF0114 protein PSPA7_5214 (162 aa).

3 helical membrane passes run 15 to 35, 53 to 73, and 136 to 156; these read LLAP…IKFF, LILV…LVMV, and LMWY…MGYL.

The protein belongs to the UPF0114 family.

The protein localises to the cell membrane. The protein is UPF0114 protein PSPA7_5214 of Pseudomonas paraeruginosa (strain DSM 24068 / PA7) (Pseudomonas aeruginosa (strain PA7)).